We begin with the raw amino-acid sequence, 254 residues long: 4-hydroxy-tetrahydrodipicolinate reductase (254 aa).

Residue 13-18 (GAAGRM) coordinates NAD(+). R39 is a binding site for NADP(+). NAD(+) is bound by residues 86–88 (GTT) and 110–113 (AANT). H143 serves as the catalytic Proton donor/acceptor. H144 provides a ligand contact to (S)-2,3,4,5-tetrahydrodipicolinate. The active-site Proton donor is the K147. 153 to 154 (GT) contacts (S)-2,3,4,5-tetrahydrodipicolinate.

It belongs to the DapB family.

The protein localises to the cytoplasm. The enzyme catalyses (S)-2,3,4,5-tetrahydrodipicolinate + NAD(+) + H2O = (2S,4S)-4-hydroxy-2,3,4,5-tetrahydrodipicolinate + NADH + H(+). It catalyses the reaction (S)-2,3,4,5-tetrahydrodipicolinate + NADP(+) + H2O = (2S,4S)-4-hydroxy-2,3,4,5-tetrahydrodipicolinate + NADPH + H(+). It functions in the pathway amino-acid biosynthesis; L-lysine biosynthesis via DAP pathway; (S)-tetrahydrodipicolinate from L-aspartate: step 4/4. Its function is as follows. Catalyzes the conversion of 4-hydroxy-tetrahydrodipicolinate (HTPA) to tetrahydrodipicolinate. The sequence is that of 4-hydroxy-tetrahydrodipicolinate reductase from Zymomonas mobilis subsp. mobilis (strain ATCC 31821 / ZM4 / CP4).